A 467-amino-acid polypeptide reads, in one-letter code: Probable apyrase 2 (467 aa).

Topologically, residues 1–25 (MRRYSALPGGGARPDTLADRLHRYR) are cytoplasmic. Residues 26–46 (GVLLVILAPLALVSLVLLLMP) traverse the membrane as a helical; Signal-anchor for type II membrane protein segment. The Extracellular segment spans residues 47–467 (RSPASSSAAA…PLGSAIEVAS (421 aa)). 70 to 80 (VIFDAGSSGSR) contributes to the ATP binding site. The Proton acceptor role is filled by E192. 216 to 226 (GVVDLGGGSVQ) is an ATP binding site.

Belongs to the GDA1/CD39 NTPase family. It depends on Ca(2+) as a cofactor.

The protein localises to the membrane. The catalysed reaction is a ribonucleoside 5'-triphosphate + 2 H2O = a ribonucleoside 5'-phosphate + 2 phosphate + 2 H(+). Its function is as follows. Catalyzes the hydrolysis of phosphoanhydride bonds of nucleoside tri- and di-phosphates. In Oryza sativa subsp. japonica (Rice), this protein is Probable apyrase 2 (APY2).